Here is a 137-residue protein sequence, read N- to C-terminus: MSFFSEFKEFAVKGNVIDLAVGVIIGGAFGKIVDSIVGDLIMPIVSKLFGGLDFSNYYVGLAGQAAGLPLAEAKKAGAVFAYGNFITVALNFAILAFIIFLMIKQINRLKKDEPAAPPAPPAEDIVLLREIRDALKK.

The next 2 helical transmembrane spans lie at 16–36 and 83–103; these read VIDL…VDSI and GNFI…FLMI.

This sequence belongs to the MscL family. As to quaternary structure, homopentamer.

It localises to the cell inner membrane. In terms of biological role, channel that opens in response to stretch forces in the membrane lipid bilayer. May participate in the regulation of osmotic pressure changes within the cell. The sequence is that of Large-conductance mechanosensitive channel from Methylibium petroleiphilum (strain ATCC BAA-1232 / LMG 22953 / PM1).